Consider the following 90-residue polypeptide: Putative large ribosomal subunit protein uL23c (90 aa).

Positions Met-1–Glu-46 are coded by first part of gene. The segment at Met-47 to Thr-90 is coded by second part of gene.

The protein belongs to the universal ribosomal protein uL23 family. Part of the 50S ribosomal subunit.

It localises to the plastid. The protein localises to the chloroplast. In terms of biological role, binds to 23S rRNA. The chain is Putative large ribosomal subunit protein uL23c (rpl23) from Spinacia oleracea (Spinach).